The sequence spans 540 residues: Phosphoenolpyruvate carboxykinase (ATP) (540 aa).

R65 contacts substrate. Residue K87 is modified to N6-acetyllysine. 2 residues coordinate substrate: Y207 and K213. ATP is bound by residues K213, H232, and 248 to 256 (GLSGTGKTT). K213 and H232 together coordinate Mn(2+). D269 serves as a coordination point for Mn(2+). ATP is bound by residues E297, R333, 449 to 450 (RI), and T455. R333 serves as a coordination point for substrate. K523 is modified (N6-acetyllysine).

The protein belongs to the phosphoenolpyruvate carboxykinase (ATP) family. In terms of assembly, monomer. The cofactor is Mn(2+).

The protein resides in the cytoplasm. It catalyses the reaction oxaloacetate + ATP = phosphoenolpyruvate + ADP + CO2. It participates in carbohydrate biosynthesis; gluconeogenesis. In terms of biological role, involved in the gluconeogenesis. Catalyzes the conversion of oxaloacetate (OAA) to phosphoenolpyruvate (PEP) through direct phosphoryl transfer between the nucleoside triphosphate and OAA. The chain is Phosphoenolpyruvate carboxykinase (ATP) from Escherichia coli O157:H7.